The following is a 318-amino-acid chain: Cyclic AMP receptor-like protein F (318 aa).

Residues Met-1–Asp-3 lie on the Extracellular side of the membrane. The chain crosses the membrane as a helical span at residues Ile-4 to Ile-24. Residues Thr-25 to Asn-38 are Cytoplasmic-facing. Residues Phe-39 to Ile-59 traverse the membrane as a helical segment. The Extracellular segment spans residues Phe-60–Ser-83. Cys-81 and Cys-177 are disulfide-bonded. Residues Leu-84 to Val-104 traverse the membrane as a helical segment. Over Lys-105–Thr-145 the chain is Cytoplasmic. The helical transmembrane segment at Leu-146–Ile-166 threads the bilayer. The Extracellular portion of the chain corresponds to Ser-167 to Arg-187. The helical transmembrane segment at Phe-188–Ile-208 threads the bilayer. Residues Leu-209–Glu-234 lie on the Cytoplasmic side of the membrane. A helical membrane pass occupies residues Phe-235 to Val-255. Over Leu-256–Thr-267 the chain is Extracellular. Residues Phe-268–Trp-288 traverse the membrane as a helical segment. Residues Ala-289–Lys-318 are Cytoplasmic-facing.

Belongs to the G-protein coupled receptor 5 family.

The protein localises to the membrane. Its function is as follows. Receptor for cAMP. The protein is Cyclic AMP receptor-like protein F (crlF) of Dictyostelium discoideum (Social amoeba).